Reading from the N-terminus, the 213-residue chain is Phosphatidylserine decarboxylase proenzyme (213 aa).

The Schiff-base intermediate with substrate; via pyruvic acid role is filled by S182. Residue S182 is modified to Pyruvic acid (Ser); by autocatalysis.

This sequence belongs to the phosphatidylserine decarboxylase family. PSD-A subfamily. Heterodimer of a large membrane-associated beta subunit and a small pyruvoyl-containing alpha subunit. Pyruvate is required as a cofactor. Is synthesized initially as an inactive proenzyme. Formation of the active enzyme involves a self-maturation process in which the active site pyruvoyl group is generated from an internal serine residue via an autocatalytic post-translational modification. Two non-identical subunits are generated from the proenzyme in this reaction, and the pyruvate is formed at the N-terminus of the alpha chain, which is derived from the carboxyl end of the proenzyme. The post-translation cleavage follows an unusual pathway, termed non-hydrolytic serinolysis, in which the side chain hydroxyl group of the serine supplies its oxygen atom to form the C-terminus of the beta chain, while the remainder of the serine residue undergoes an oxidative deamination to produce ammonia and the pyruvoyl prosthetic group on the alpha chain.

The protein resides in the cell membrane. It catalyses the reaction a 1,2-diacyl-sn-glycero-3-phospho-L-serine + H(+) = a 1,2-diacyl-sn-glycero-3-phosphoethanolamine + CO2. Its pathway is phospholipid metabolism; phosphatidylethanolamine biosynthesis; phosphatidylethanolamine from CDP-diacylglycerol: step 2/2. Its function is as follows. Catalyzes the formation of phosphatidylethanolamine (PtdEtn) from phosphatidylserine (PtdSer). This chain is Phosphatidylserine decarboxylase proenzyme, found in Geotalea daltonii (strain DSM 22248 / JCM 15807 / FRC-32) (Geobacter daltonii).